The primary structure comprises 680 residues: Methionine--tRNA ligase (680 aa).

Positions 14 to 24 match the 'HIGH' region motif; that stretch reads PYANGPIHLGH. Zn(2+)-binding residues include Cys-145, Cys-148, Cys-158, and Cys-161. The short motif at 330 to 334 is the 'KMSKS' region element; sequence KMSKS. Lys-333 serves as a coordination point for ATP. The 102-residue stretch at 579–680 folds into the tRNA-binding domain; it reads DFAKVDFRIA…DGAQPGMRVK (102 aa).

It belongs to the class-I aminoacyl-tRNA synthetase family. MetG type 1 subfamily. As to quaternary structure, homodimer. The cofactor is Zn(2+).

It localises to the cytoplasm. It catalyses the reaction tRNA(Met) + L-methionine + ATP = L-methionyl-tRNA(Met) + AMP + diphosphate. Its function is as follows. Is required not only for elongation of protein synthesis but also for the initiation of all mRNA translation through initiator tRNA(fMet) aminoacylation. In Hydrogenovibrio crunogenus (strain DSM 25203 / XCL-2) (Thiomicrospira crunogena), this protein is Methionine--tRNA ligase.